The primary structure comprises 555 residues: Formate--tetrahydrofolate ligase (555 aa).

Belongs to the formate--tetrahydrofolate ligase family.

The catalysed reaction is (6S)-5,6,7,8-tetrahydrofolate + formate + ATP = (6R)-10-formyltetrahydrofolate + ADP + phosphate. It participates in one-carbon metabolism; tetrahydrofolate interconversion. In Porphyromonas gingivalis (strain ATCC BAA-308 / W83), this protein is Formate--tetrahydrofolate ligase.